Reading from the N-terminus, the 368-residue chain is Probable endopolygalacturonase A (368 aa).

The N-terminal stretch at 1-18 (MRSVKLFGLAALGSLGAA) is a signal peptide. The propeptide occupies 19 to 31 (APAPSRVSDLTKR). A disulfide bridge links C35 with C50. PbH1 repeat units lie at residues 140-162 (LEDSTITGLSIKNTPVQAISVQA), 167-192 (LIDITIDNSDGDDNGGHNTDGFDISE), 193-214 (STGVYIRGATVKNQDDCIAINS), 215-235 (GENIEFSGGTCSGGHGLSIGS), 244-265 (VKNVTITDSTVTDSANGVRIKT), 273-295 (VSQVTYSNIKLSGITDYGIVIEQ), and 307-352 (TTGV…DITG). D207 functions as the Proton donor in the catalytic mechanism. The cysteines at positions 209 and 225 are disulfide-linked. The active site involves H229. A glycan (N-linked (GlcNAc...) asparagine) is linked at N246. 2 disulfide bridges follow: C335–C340 and C359–C368.

The protein belongs to the glycosyl hydrolase 28 family.

The protein resides in the secreted. It catalyses the reaction (1,4-alpha-D-galacturonosyl)n+m + H2O = (1,4-alpha-D-galacturonosyl)n + (1,4-alpha-D-galacturonosyl)m.. Its function is as follows. Involved in maceration and soft-rotting of plant tissue. Hydrolyzes the 1,4-alpha glycosidic bonds of de-esterified pectate in the smooth region of the plant cell wall. The polypeptide is Probable endopolygalacturonase A (pgaA) (Aspergillus fumigatus (strain CBS 144.89 / FGSC A1163 / CEA10) (Neosartorya fumigata)).